A 318-amino-acid chain; its full sequence is Methionyl-tRNA formyltransferase (318 aa).

115-118 (SLLP) provides a ligand contact to (6S)-5,6,7,8-tetrahydrofolate.

This sequence belongs to the Fmt family.

The catalysed reaction is L-methionyl-tRNA(fMet) + (6R)-10-formyltetrahydrofolate = N-formyl-L-methionyl-tRNA(fMet) + (6S)-5,6,7,8-tetrahydrofolate + H(+). Attaches a formyl group to the free amino group of methionyl-tRNA(fMet). The formyl group appears to play a dual role in the initiator identity of N-formylmethionyl-tRNA by promoting its recognition by IF2 and preventing the misappropriation of this tRNA by the elongation apparatus. The sequence is that of Methionyl-tRNA formyltransferase from Deinococcus radiodurans (strain ATCC 13939 / DSM 20539 / JCM 16871 / CCUG 27074 / LMG 4051 / NBRC 15346 / NCIMB 9279 / VKM B-1422 / R1).